A 404-amino-acid chain; its full sequence is Putative replication protein C (404 aa).

The segment at 249–287 (PDQIERHKQNSHPESTNEFEPSSREEQGERPSPAIEPQR) is disordered.

This sequence to A.rhizogenes possible replication protein C (RepC).

The protein is Putative replication protein C of Sinorhizobium fredii (strain NBRC 101917 / NGR234).